Consider the following 115-residue polypeptide: NADH-ubiquinone oxidoreductase chain 3 (115 aa).

3 helical membrane passes run Phe3 to Trp23, Phe55 to Leu75, and Leu84 to Tyr104.

It belongs to the complex I subunit 3 family. Core subunit of respiratory chain NADH dehydrogenase (Complex I) which is composed of 45 different subunits. Interacts with TMEM186. Interacts with TMEM242.

Its subcellular location is the mitochondrion inner membrane. The catalysed reaction is a ubiquinone + NADH + 5 H(+)(in) = a ubiquinol + NAD(+) + 4 H(+)(out). Core subunit of the mitochondrial membrane respiratory chain NADH dehydrogenase (Complex I) which catalyzes electron transfer from NADH through the respiratory chain, using ubiquinone as an electron acceptor. Essential for the catalytic activity of complex I. The chain is NADH-ubiquinone oxidoreductase chain 3 from Pongo abelii (Sumatran orangutan).